Consider the following 308-residue polypeptide: Oxygen-dependent coproporphyrinogen-III oxidase (308 aa).

Ser100 serves as a coordination point for substrate. His104 and His114 together coordinate a divalent metal cation. His114 (proton donor) is an active-site residue. 116–118 (NFR) contributes to the substrate binding site. 2 residues coordinate a divalent metal cation: His153 and His183. The important for dimerization stretch occupies residues 248-283 (YVEFNLVFDRGTIFGLQSGGRTESILSSMPPMATWK). 266-268 (GGR) is a substrate binding site.

This sequence belongs to the aerobic coproporphyrinogen-III oxidase family. Homodimer. A divalent metal cation serves as cofactor.

The protein localises to the cytoplasm. The catalysed reaction is coproporphyrinogen III + O2 + 2 H(+) = protoporphyrinogen IX + 2 CO2 + 2 H2O. It functions in the pathway porphyrin-containing compound metabolism; protoporphyrin-IX biosynthesis; protoporphyrinogen-IX from coproporphyrinogen-III (O2 route): step 1/1. Its function is as follows. Involved in the heme biosynthesis. Catalyzes the aerobic oxidative decarboxylation of propionate groups of rings A and B of coproporphyrinogen-III to yield the vinyl groups in protoporphyrinogen-IX. The chain is Oxygen-dependent coproporphyrinogen-III oxidase from Francisella tularensis subsp. holarctica (strain OSU18).